A 476-amino-acid polypeptide reads, in one-letter code: Adenosylhomocysteinase (476 aa).

Substrate-binding residues include threonine 67, aspartate 142, and glutamate 202. NAD(+) is bound at residue 203–205 (TTT). Substrate is bound by residues lysine 232 and aspartate 236. Residues asparagine 237, 266 to 271 (GYGDVG), glutamate 289, asparagine 324, 345 to 347 (IGH), and asparagine 390 contribute to the NAD(+) site.

Belongs to the adenosylhomocysteinase family. It depends on NAD(+) as a cofactor.

The protein localises to the cytoplasm. The catalysed reaction is S-adenosyl-L-homocysteine + H2O = L-homocysteine + adenosine. The protein operates within amino-acid biosynthesis; L-homocysteine biosynthesis; L-homocysteine from S-adenosyl-L-homocysteine: step 1/1. Its function is as follows. May play a key role in the regulation of the intracellular concentration of adenosylhomocysteine. This is Adenosylhomocysteinase from Synechococcus sp. (strain CC9605).